A 483-amino-acid polypeptide reads, in one-letter code: NADH-quinone oxidoreductase subunit N (483 aa).

The next 13 membrane-spanning stretches (helical) occupy residues 13-33 (PALPEILLAVGAMALLMYGVF), 45-65 (GALALFALVGAFLIIEPNAYV), 80-100 (FMKLLILLAAAAAIVMSLTFI), 111-131 (PVLIILATLGMFMMVSANGLI), 165-185 (FVLGALASGMLLYGASLIYGF), 205-225 (IGVIFGIVFVLAGLAFKISAV), 244-264 (AFFAGAPKVAAMALILRVLFV), 276-296 (IIVFIAIASMVLGAFAAIGQS), 301-321 (LMAYSSISHMGFAMVGLAAGT), 328-348 (VLIYLVIYVVMNAGVFCCILA), 373-393 (AFMMAMLMFSLAGVPPLAGFF), 407-429 (LYPLAVIGVLASVVGAFYYLRIV), and 452-472 (VLGISGVFTLFFFVYPAPLIL).

Belongs to the complex I subunit 2 family. NDH-1 is composed of 14 different subunits. Subunits NuoA, H, J, K, L, M, N constitute the membrane sector of the complex.

The protein resides in the cell inner membrane. The catalysed reaction is a quinone + NADH + 5 H(+)(in) = a quinol + NAD(+) + 4 H(+)(out). Its function is as follows. NDH-1 shuttles electrons from NADH, via FMN and iron-sulfur (Fe-S) centers, to quinones in the respiratory chain. The immediate electron acceptor for the enzyme in this species is believed to be ubiquinone. Couples the redox reaction to proton translocation (for every two electrons transferred, four hydrogen ions are translocated across the cytoplasmic membrane), and thus conserves the redox energy in a proton gradient. The sequence is that of NADH-quinone oxidoreductase subunit N from Parvibaculum lavamentivorans (strain DS-1 / DSM 13023 / NCIMB 13966).